The chain runs to 427 residues: MSTSFENKATNRGVITFTISQDKIKPALDQAFNKIKKDLNAPGFRKGHMPRPVFDQRFGEEVLYEEALNIVLPAAYEGAVAELELDVVAQPKIDVVSMEKCQEWTLTAEVVTKPEVKLGDYKDLTVEVEASKEVTDEEVDAKVERERNNLAELVVKEEAAVEGDTVVIDFVGSVDGVEFDGGKGDNFSLELGSGQFIPGFEEQLVGAKAGDTVEVNVTFPENYQAEDLAGKAAKFVATVHEVKAKEVPELDDELAKDIDEEVETLDELKAKYRKELEASKEAAYDDALEGAAIELAVENAEIVELPEEMVHDEVHRSVNEFMASMQRQGISPDMYFQLTGTSQEDLHKQHEAEADKRVKTNLVIEAIAKAEGFEASDDEIEKEINDLAAEYSMPVEQVRSLLSADMLKHDIVMKKAVEVITSSAKAK.

In terms of domain architecture, PPIase FKBP-type spans 163 to 248; it reads GDTVVIDFVG…VHEVKAKEVP (86 aa).

The protein belongs to the FKBP-type PPIase family. Tig subfamily.

Its subcellular location is the cytoplasm. It catalyses the reaction [protein]-peptidylproline (omega=180) = [protein]-peptidylproline (omega=0). Involved in protein export. Acts as a chaperone by maintaining the newly synthesized protein in an open conformation. Functions as a peptidyl-prolyl cis-trans isomerase. This Streptococcus equi subsp. equi (strain 4047) protein is Trigger factor.